Consider the following 138-residue polypeptide: Large ribosomal subunit protein uL16 (138 aa).

Belongs to the universal ribosomal protein uL16 family. In terms of assembly, part of the 50S ribosomal subunit.

Functionally, binds 23S rRNA and is also seen to make contacts with the A and possibly P site tRNAs. This is Large ribosomal subunit protein uL16 from Syntrophobacter fumaroxidans (strain DSM 10017 / MPOB).